The chain runs to 333 residues: D-fructose 1,6-bisphosphatase class 2/sedoheptulose 1,7-bisphosphatase (333 aa).

Residues D33, E57, D85, and E88 each contribute to the Mn(2+) site. Residues 88 to 90 (EGT), Y119, 164 to 166 (RAR), and 186 to 188 (DGD) contribute to the substrate site. E213 is a Mn(2+) binding site.

The protein belongs to the FBPase class 2 family. In terms of assembly, homotetramer. The cofactor is Mn(2+).

The catalysed reaction is beta-D-fructose 1,6-bisphosphate + H2O = beta-D-fructose 6-phosphate + phosphate. The enzyme catalyses D-sedoheptulose 1,7-bisphosphate + H2O = D-sedoheptulose 7-phosphate + phosphate. It functions in the pathway carbohydrate biosynthesis; Calvin cycle. In terms of biological role, catalyzes the hydrolysis of fructose 1,6-bisphosphate (Fru 1,6-P2) and sedoheptulose 1,7-bisphosphate (Sed 1,7-P2) to fructose 6-phosphate and sedoheptulose 7-phosphate, respectively. This chain is D-fructose 1,6-bisphosphatase class 2/sedoheptulose 1,7-bisphosphatase, found in Prochlorococcus marinus subsp. pastoris (strain CCMP1986 / NIES-2087 / MED4).